The following is a 346-amino-acid chain: MERKSNLSLLLLLLVLGMPLVRGSSPLPLVVNTWPFKNATEAAWWTLLSGGSALDAVENGCAVCEKEQCDGTVGFGGSPDEGGETTLDAMIMDGTAMDVGAVGGLRRIKNAIGVARRVLEHTTHTLLVGDSATKFAESMGFTNEDLSTKTSRDLHSDWLSRNCQPNYWRNVIPDPSKYCGPYKPSGFLKQSISPHKEEVDIHSHDTIGMVVIHKTGHTAAGTSTNGIKFKIPGRVGDSPIPGAGAYADDTAGAAAATGDGDTLLRFLPSYQAVEYMRGGDDPAIACQKVILRIQKYYPNFFGAVICASVNGSYGAACNKLPTFTQFSFMVSNSLHNEPTEKKVDCI.

Positions 1 to 23 (MERKSNLSLLLLLLVLGMPLVRG) are cleaved as a signal peptide. The N-linked (GlcNAc...) asparagine glycan is linked to N38. Cystine bridges form between C64/C69 and C163/C179. The active-site Nucleophile is the T206. Substrate-binding positions include 234-237 (RVGD) and 257-260 (TGDG). A disulfide bridge links C286 with C306. A glycan (N-linked (GlcNAc...) asparagine) is linked at N310. A disulfide bond links C317 and C345.

The protein belongs to the Ntn-hydrolase family. As to quaternary structure, heterotetramer of two alpha and two beta chains arranged as a dimer of alpha/beta heterodimers. Cleaved into an alpha and beta chain by autocatalysis; this activates the enzyme. The N-terminal residue of the beta subunit is responsible for the nucleophile hydrolase activity. In terms of processing, N-glycosylated.

It is found in the lysosome. The enzyme catalyses N(4)-(beta-N-acetyl-D-glucosaminyl)-L-asparagine + H2O = N-acetyl-beta-D-glucosaminylamine + L-aspartate + H(+). Functionally, cleaves the GlcNAc-Asn bond which joins oligosaccharides to the peptide of asparagine-linked glycoproteins. This is N(4)-(beta-N-acetylglucosaminyl)-L-asparaginase (Aga) from Mus musculus (Mouse).